A 632-amino-acid chain; its full sequence is Protein NSP-INTERACTING KINASE 3 (632 aa).

Residues 1-25 (MEGVRFVVWRLGFLVFVWFFDISSA) form the signal peptide. Residues 26–238 (TLSPTGVNYE…GTRTNGHHVA (213 aa)) lie on the Extracellular side of the membrane. An N-linked (GlcNAc...) asparagine glycan is attached at asparagine 96. 4 LRR repeats span residues 97-121 (LTYL…IGRL), 122-145 (EKLQ…LGEL), 147-168 (NLNY…SLSK), and 169-193 (IEGL…SART). N-linked (GlcNAc...) asparagine glycans are attached at residues asparagine 131, asparagine 155, asparagine 181, and asparagine 210. A helical membrane pass occupies residues 239-259 (LAFAASFSAAFFVFFTSGMFL). The Cytoplasmic portion of the chain corresponds to 260–632 (WWRYRRNKQI…VEAIELSGPR (373 aa)). The residue at position 298 (threonine 298) is a Phosphothreonine. Residues 301 to 584 (FNSKNILGRG…EGDGLAERWE (284 aa)) form the Protein kinase domain. 307 to 315 (LGRGGYGIV) contributes to the ATP binding site. At threonine 324 the chain carries Phosphothreonine. Lysine 329 is a binding site for ATP. Residues serine 382 and serine 385 each carry the phosphoserine modification. The interval 415–495 (YLHEQCDPKI…DVFGFGILLL (81 aa)) is interaction with geminivirus NSP protein. Aspartate 428 functions as the Proton acceptor in the catalytic mechanism. 3 positions are modified to phosphothreonine: threonine 461, threonine 462, and threonine 467. Tyrosine 475 bears the Phosphotyrosine mark. Phosphoserine is present on serine 477. Position 478 is a phosphothreonine (threonine 478). Phosphoserine is present on serine 482. Threonine 557 is modified (phosphothreonine).

Belongs to the protein kinase superfamily. Ser/Thr protein kinase family. As to quaternary structure, oligomer. Interacts with geminivirus nuclear shuttle protein (NSP). Autophosphorylated. Expressed in seedlings, leaves and flowers.

Its subcellular location is the cell membrane. The catalysed reaction is L-seryl-[protein] + ATP = O-phospho-L-seryl-[protein] + ADP + H(+). It carries out the reaction L-threonyl-[protein] + ATP = O-phospho-L-threonyl-[protein] + ADP + H(+). Its activity is regulated as follows. Inhibited by the viral nuclear shuttle protein (NSP) that binds to the region required for oligomerization. Its function is as follows. Involved in defense response to geminivirus infection. This chain is Protein NSP-INTERACTING KINASE 3 (NIK3), found in Arabidopsis thaliana (Mouse-ear cress).